Here is a 414-residue protein sequence, read N- to C-terminus: WW domain-containing oxidoreductase (414 aa).

Residues 1–23 form a disordered region; the sequence is MAALRYAGLDDTDSEDELPPGWE. A Phosphothreonine modification is found at threonine 12. At serine 14 the chain carries Phosphoserine. In terms of domain architecture, WW 1 spans 16–49; it reads DELPPGWEERTTKDGWVYYANHTEEKTQWEHPKT. Residue tyrosine 33 is modified to Phosphotyrosine. Residues 50-55 carry the Nuclear localization signal motif; sequence GKRKRV. Residues 57-90 enclose the WW 2 domain; it reads GDLPYGWEQETDENGQVFFVDHINKRTTYLDPRL. Positions 125 to 414 are interaction with MAPT; it reads KVVVVTGANS…IQERLGSQSG (290 aa). 131–137 provides a ligand contact to NADP(+); that stretch reads GANSGIG. The tract at residues 209-273 is mediates targeting to the mitochondria; the sequence is CNAATFALPW…RFTDINDSLG (65 aa). Serine 260 contributes to the substrate binding site. At tyrosine 287 the chain carries Phosphotyrosine; by TNK2. The Proton acceptor role is filled by tyrosine 293.

Belongs to the short-chain dehydrogenases/reductases (SDR) family. As to quaternary structure, interacts with TP53, p73/TP73 and MAPK8. Interacts with MAPT/TAU, RUNX2 and HYAL2. Forms a ternary complex with TP53 and MDM2. Interacts with ERBB4, LITAF and WBP1. Interacts with DVL1, DVL2 and DVL3. May interact with FAM189B and SCOTIN. Interacts with TNK2. Interacts with TMEM207. Interacts (via WW domain) with VOPP1. Post-translationally, phosphorylated upon genotoxic stress. Phosphorylation of Tyr-33 regulates interaction with TP53, TP73 and MAPK8. May also regulate proapoptotic activity. Phosphorylation by TNK2 is associated with polyubiquitination and degradation. In terms of processing, ubiquitinated when phosphorylated by TNK2, leading to its degradation. Widely expressed. Strongly expressed in testis, prostate, and ovary. Overexpressed in cancer cell lines. Isoform 5 and isoform 6 may only be expressed in tumor cell lines.

The protein resides in the cytoplasm. The protein localises to the nucleus. Its subcellular location is the mitochondrion. It is found in the golgi apparatus. It localises to the lysosome. Putative oxidoreductase. Acts as a tumor suppressor and plays a role in apoptosis. Required for normal bone development. May function synergistically with p53/TP53 to control genotoxic stress-induced cell death. Plays a role in TGFB1 signaling and TGFB1-mediated cell death. May also play a role in tumor necrosis factor (TNF)-mediated cell death. Inhibits Wnt signaling, probably by sequestering DVL2 in the cytoplasm. This Homo sapiens (Human) protein is WW domain-containing oxidoreductase (WWOX).